A 414-amino-acid chain; its full sequence is Secreted beta-glucosidase sun1 (414 aa).

An N-terminal signal peptide occupies residues Met-1–Ala-19. An N-linked (GlcNAc...) asparagine glycan is attached at Asn-80. The span at Thr-115 to Thr-140 shows a compositional bias: low complexity. The interval Thr-115–Gly-141 is disordered. The N-linked (GlcNAc...) asparagine glycan is linked to Asn-377.

The protein belongs to the SUN family. Post-translationally, highly glycosylated.

It localises to the secreted. It is found in the cell wall. Functionally, cell surface beta-glucosidase involved in cell wall biosynthesis and septation, and thus required for normal growth and correct hyphal morphogenesis. Has hydrolytic activity on linear (1-&gt;3)-beta-D-glucans such as laminaribiose and other laminarioligosaccharides. Also has a minor transferase activity. In Aspergillus fumigatus (strain ATCC MYA-4609 / CBS 101355 / FGSC A1100 / Af293) (Neosartorya fumigata), this protein is Secreted beta-glucosidase sun1 (sun1).